Consider the following 689-residue polypeptide: Glycine--tRNA ligase beta subunit (689 aa).

It belongs to the class-II aminoacyl-tRNA synthetase family. Tetramer of two alpha and two beta subunits.

It is found in the cytoplasm. The enzyme catalyses tRNA(Gly) + glycine + ATP = glycyl-tRNA(Gly) + AMP + diphosphate. The chain is Glycine--tRNA ligase beta subunit from Oenococcus oeni (strain ATCC BAA-331 / PSU-1).